Consider the following 297-residue polypeptide: ATP synthase subunit a (297 aa).

8 consecutive transmembrane segments (helical) span residues 38–58, 77–97, 107–127, 133–153, 174–194, 202–222, 230–250, and 252–272; these read PLIP…IAIL, GYVL…VDLL, LFII…VGGI, SSTV…IMGV, TIPL…LLSI, VLAG…FFTL, VGLV…HVYF, and ILVS…YWSQ.

Belongs to the ATPase A chain family. In terms of assembly, F-type ATPases have 2 components, CF(1) - the catalytic core - and CF(0) - the membrane proton channel. CF(1) has five subunits: alpha(3), beta(3), gamma(1), delta(1), epsilon(1). CF(0) has three main subunits: a(1), b(2) and c(9-12). The alpha and beta chains form an alternating ring which encloses part of the gamma chain. CF(1) is attached to CF(0) by a central stalk formed by the gamma and epsilon chains, while a peripheral stalk is formed by the delta and b chains.

The protein localises to the cell membrane. Functionally, key component of the proton channel; it plays a direct role in the translocation of protons across the membrane. This is ATP synthase subunit a from Mycoplasmoides gallisepticum (strain R(low / passage 15 / clone 2)) (Mycoplasma gallisepticum).